A 283-amino-acid polypeptide reads, in one-letter code: 1-deoxypentalenic acid 11-beta-hydroxylase (283 aa).

Position 117 (arginine 117) interacts with substrate. Fe cation is bound by residues histidine 135 and aspartate 137. 2-oxoglutarate contacts are provided by residues 135 to 137 and tryptophan 151; that span reads HQD. Position 186 (arginine 186) interacts with substrate. Histidine 224 is a binding site for Fe cation. The 2-oxoglutarate site is built by serine 226 and arginine 238. Positions 251–283 are disordered; it reads HRGFNALTPWPESAKDASKGIMSKITGTPTTAE.

Belongs to the PhyH family. The cofactor is Fe cation. L-ascorbate is required as a cofactor.

It carries out the reaction 1-deoxypentalenate + 2-oxoglutarate + O2 = 1-deoxy-11beta-hydroxypentalenate + succinate + CO2. Its pathway is antibiotic biosynthesis; pentalenolactone biosynthesis. In terms of biological role, catalyzes the conversion of 1-deoxypentalenic acid to 11-beta-hydroxy-1-deoxypentalenic acid in the biosynthesis of pentalenolactone antibiotic. The chain is 1-deoxypentalenic acid 11-beta-hydroxylase (pntH) from Streptomyces arenae.